The primary structure comprises 364 residues: MNERKIIHIDMDAFYASVEQRDHPELRGKPLAVGHAEERGVVAAASYEARRYGVRSAMSSQKAKRLCPQLIFVPGRMEVYKSVSRQVHEIFHEYTDLIEPLSLDEAFLDVTENKQGILLAVDIAKAIKQRIREELSLVASAGVSYNKFLAKIASDFRKPDGLCTIHPDQAIDFIARLPIESFWGVGPVTARKMHLLGIHNGLQLRECSSEMLVRQFGKVGLLYYDFARGVDLRPVEAVRIRKSIGCEHTLEKDIHVRSSVIIELYHVATELVERLQQKEFRGNTLTLKIKFHDFSQITRSMTQAQELTNLERILPLAKQLLKEVEYEQHPIRLIGLSVSNPREEADEHRGVWEQLSFEFSDWGK.

Residues 6–186 (IIHIDMDAFY…LPIESFWGVG (181 aa)) form the UmuC domain. Mg(2+) is bound by residues Asp-10 and Asp-104. Residue Glu-105 is part of the active site.

This sequence belongs to the DNA polymerase type-Y family. As to quaternary structure, monomer. It depends on Mg(2+) as a cofactor.

The protein localises to the cytoplasm. It catalyses the reaction DNA(n) + a 2'-deoxyribonucleoside 5'-triphosphate = DNA(n+1) + diphosphate. Its function is as follows. Poorly processive, error-prone DNA polymerase involved in untargeted mutagenesis. Copies undamaged DNA at stalled replication forks, which arise in vivo from mismatched or misaligned primer ends. These misaligned primers can be extended by PolIV. Exhibits no 3'-5' exonuclease (proofreading) activity. May be involved in translesional synthesis, in conjunction with the beta clamp from PolIII. The polypeptide is DNA polymerase IV (Bacteroides fragilis (strain YCH46)).